Consider the following 343-residue polypeptide: Chlorophyll(ide) b reductase NOL, chloroplastic (343 aa).

The transit peptide at 1–54 directs the protein to the chloroplast; it reads MAATAAYLPLRAQAQVGLAPLRPSGSAAAGARLPGRTARRRLAARGGPEAAGIR. 78–102 is a binding site for NAD(+); it reads ITGSTKGIGYALAKEFLKAGDNVVI. Tyrosine 228 serves as the catalytic Proton acceptor.

Belongs to the short-chain dehydrogenases/reductases (SDR) family. In terms of assembly, interacts with NCY1 to form a complex that acts as a chlorophyll b reductase. Expressed in leaves and stems. Also detected in non-photosynthetic tissues such as roots.

Its subcellular location is the plastid. The protein localises to the chloroplast thylakoid membrane. The enzyme catalyses 7(1)-hydroxychlorophyllide a + NAD(+) = chlorophyllide b + NADH + H(+). It carries out the reaction 7(1)-hydroxychlorophyllide a + NADP(+) = chlorophyllide b + NADPH + H(+). Functionally, required for chlorophyll b degradation. The chain is Chlorophyll(ide) b reductase NOL, chloroplastic (NOL) from Oryza sativa subsp. japonica (Rice).